The primary structure comprises 783 residues: Outer membrane usher protein FanD (783 aa).

Positions 1–23 (MNRKKHQILKILLLCLISSKSSA) are cleaved as a signal peptide. An intrachain disulfide couples C763 to C782.

This sequence belongs to the fimbrial export usher family.

It is found in the cell outer membrane. Involved in the export and assembly of K99 fimbrial subunits across the outer membrane. The sequence is that of Outer membrane usher protein FanD (fanD) from Escherichia coli.